The chain runs to 330 residues: Inactive hydroxysteroid dehydrogenase-like protein 1 (330 aa).

Alanine 2 is modified (N-acetylalanine). A required for mitochondria translocation region spans residues 2 to 82 (AAVDSFYLLY…SGATDGIGRA (81 aa)). Residues 74 to 80 (GATDGIG), aspartate 125, and lysine 222 each bind NADP(+).

This sequence belongs to the short-chain dehydrogenases/reductases (SDR) family. 17-beta-HSD 3 subfamily. Interacts with STYXL1.

Its subcellular location is the mitochondrion. This chain is Inactive hydroxysteroid dehydrogenase-like protein 1 (HSDL1), found in Pongo abelii (Sumatran orangutan).